We begin with the raw amino-acid sequence, 249 residues long: ATP synthase subunit a (249 aa).

6 helical membrane-spanning segments follow: residues 29–49, 84–104, 114–134, 140–160, 193–213, and 216–236; these read ASLF…FATS, FFPF…LGMF, IIVT…YGFY, FFGI…VASI, FVAS…LPLI, and VAMT…FAVL.

This sequence belongs to the ATPase A chain family. F-type ATPases have 2 components, CF(1) - the catalytic core - and CF(0) - the membrane proton channel. CF(1) has five subunits: alpha(3), beta(3), gamma(1), delta(1), epsilon(1). CF(0) has three main subunits: a(1), b(2) and c(9-12). The alpha and beta chains form an alternating ring which encloses part of the gamma chain. CF(1) is attached to CF(0) by a central stalk formed by the gamma and epsilon chains, while a peripheral stalk is formed by the delta and b chains.

It is found in the cell inner membrane. Its function is as follows. Key component of the proton channel; it plays a direct role in the translocation of protons across the membrane. This is ATP synthase subunit a from Agrobacterium fabrum (strain C58 / ATCC 33970) (Agrobacterium tumefaciens (strain C58)).